The chain runs to 442 residues: Trigger factor (442 aa).

In terms of domain architecture, PPIase FKBP-type spans 175 to 258; the sequence is GDFISISLHV…VNAVIEVSIP (84 aa).

It belongs to the FKBP-type PPIase family. Tig subfamily.

It localises to the cytoplasm. The catalysed reaction is [protein]-peptidylproline (omega=180) = [protein]-peptidylproline (omega=0). Involved in protein export. Acts as a chaperone by maintaining the newly synthesized protein in an open conformation. Functions as a peptidyl-prolyl cis-trans isomerase. The protein is Trigger factor (tig) of Chlamydia pneumoniae (Chlamydophila pneumoniae).